The sequence spans 279 residues: Tryptophan synthase alpha chain (279 aa).

Residues Glu50 and Asp61 each act as proton acceptor in the active site.

Belongs to the TrpA family. As to quaternary structure, tetramer of two alpha and two beta chains.

It carries out the reaction (1S,2R)-1-C-(indol-3-yl)glycerol 3-phosphate + L-serine = D-glyceraldehyde 3-phosphate + L-tryptophan + H2O. It functions in the pathway amino-acid biosynthesis; L-tryptophan biosynthesis; L-tryptophan from chorismate: step 5/5. The alpha subunit is responsible for the aldol cleavage of indoleglycerol phosphate to indole and glyceraldehyde 3-phosphate. The protein is Tryptophan synthase alpha chain of Brucella melitensis biotype 1 (strain ATCC 23456 / CCUG 17765 / NCTC 10094 / 16M).